A 320-amino-acid polypeptide reads, in one-letter code: MRSAQVYRWQIPMDAGVVLRDRRLKTRDGLYVCLREGEREGWGEISPLPGFSQETWEEAQSVLLAWVNNWLAGDCELPQMPSVAFGVSCALAELADTLPQAANYRTAPLCNGDPDDLILKLADMPGEKVAKVKVGLYEAVRDGMVVNLLLEAIPDLHLRLDANRAWTPLKGQQFAKYVNPDYRHRIAFLEEPCKTRDDSRAFARETGIAIAWDESLREPDFAFVAEEGVRAVVIKPTLTGSLEKVREQVQAAHALGLTAVISSSIESSLGLTQLARIAAWLTPDTIPGLDTLDLMQAQQVRRWPGSTLPVVEVDALERLL.

The Proton donor role is filled by lysine 133. Positions 161, 190, and 213 each coordinate Mg(2+). Residue lysine 235 is the Proton acceptor of the active site.

This sequence belongs to the mandelate racemase/muconate lactonizing enzyme family. MenC type 1 subfamily. Requires a divalent metal cation as cofactor.

The enzyme catalyses (1R,6R)-6-hydroxy-2-succinyl-cyclohexa-2,4-diene-1-carboxylate = 2-succinylbenzoate + H2O. Its pathway is quinol/quinone metabolism; 1,4-dihydroxy-2-naphthoate biosynthesis; 1,4-dihydroxy-2-naphthoate from chorismate: step 4/7. It functions in the pathway quinol/quinone metabolism; menaquinone biosynthesis. Converts 2-succinyl-6-hydroxy-2,4-cyclohexadiene-1-carboxylate (SHCHC) to 2-succinylbenzoate (OSB). This Escherichia coli O157:H7 protein is o-succinylbenzoate synthase.